Reading from the N-terminus, the 466-residue chain is UDP-N-acetylmuramoylalanine--D-glutamate ligase (466 aa).

Residue 124–130 (GSDGKTT) coordinates ATP.

Belongs to the MurCDEF family.

It is found in the cytoplasm. The catalysed reaction is UDP-N-acetyl-alpha-D-muramoyl-L-alanine + D-glutamate + ATP = UDP-N-acetyl-alpha-D-muramoyl-L-alanyl-D-glutamate + ADP + phosphate + H(+). It functions in the pathway cell wall biogenesis; peptidoglycan biosynthesis. Cell wall formation. Catalyzes the addition of glutamate to the nucleotide precursor UDP-N-acetylmuramoyl-L-alanine (UMA). The protein is UDP-N-acetylmuramoylalanine--D-glutamate ligase of Acetivibrio thermocellus (strain ATCC 27405 / DSM 1237 / JCM 9322 / NBRC 103400 / NCIMB 10682 / NRRL B-4536 / VPI 7372) (Clostridium thermocellum).